A 120-amino-acid chain; its full sequence is Neuromedin-B (120 aa).

An N-terminal signal peptide occupies residues 1-29 (MSAVPLTRMLPLRFLTHLLLLSFIPLYFC). Positions 30–44 (MEFSEDARNIEKIRR) are excised as a propeptide. Residue Met54 is modified to Methionine amide. Positions 58–120 (SLQDTYNPSE…MDDYIKTTQK (63 aa)) are excised as a propeptide.

This sequence belongs to the bombesin/neuromedin-B/ranatensin family. In terms of tissue distribution, brain, intestine, and ovaries and early embryos (stages 2 and 10).

It localises to the secreted. Stimulates smooth muscle contraction. The polypeptide is Neuromedin-B (nmb) (Xenopus laevis (African clawed frog)).